The primary structure comprises 251 residues: tRNA1(Val) (adenine(37)-N6)-methyltransferase (251 aa).

The protein belongs to the methyltransferase superfamily. tRNA (adenine-N(6)-)-methyltransferase family.

The protein localises to the cytoplasm. The catalysed reaction is adenosine(37) in tRNA1(Val) + S-adenosyl-L-methionine = N(6)-methyladenosine(37) in tRNA1(Val) + S-adenosyl-L-homocysteine + H(+). Its function is as follows. Specifically methylates the adenine in position 37 of tRNA(1)(Val) (anticodon cmo5UAC). In Yersinia enterocolitica serotype O:8 / biotype 1B (strain NCTC 13174 / 8081), this protein is tRNA1(Val) (adenine(37)-N6)-methyltransferase.